Consider the following 406-residue polypeptide: Phosphopentomutase (406 aa).

Mn(2+)-binding residues include aspartate 10, aspartate 305, histidine 310, aspartate 346, histidine 347, and histidine 358.

This sequence belongs to the phosphopentomutase family. Mn(2+) is required as a cofactor.

The protein localises to the cytoplasm. It carries out the reaction 2-deoxy-alpha-D-ribose 1-phosphate = 2-deoxy-D-ribose 5-phosphate. The catalysed reaction is alpha-D-ribose 1-phosphate = D-ribose 5-phosphate. It functions in the pathway carbohydrate degradation; 2-deoxy-D-ribose 1-phosphate degradation; D-glyceraldehyde 3-phosphate and acetaldehyde from 2-deoxy-alpha-D-ribose 1-phosphate: step 1/2. Its function is as follows. Isomerase that catalyzes the conversion of deoxy-ribose 1-phosphate (dRib-1-P) and ribose 1-phosphate (Rib-1-P) to deoxy-ribose 5-phosphate (dRib-5-P) and ribose 5-phosphate (Rib-5-P), respectively. The polypeptide is Phosphopentomutase (Photobacterium profundum (strain SS9)).